A 269-amino-acid chain; its full sequence is Chromophore lyase CRL, chloroplastic (269 aa).

A helical transmembrane segment spans residues 19 to 36 (ARGLVVKTLVLIGGALLI).

Belongs to the CpcT/CpeT biliprotein lyase family. Mostly expressed in shoot apices, to a lower extent, in leaves, inflorescence stems, buds and cotyledons, and, at low levels, in roots and siliques.

It is found in the plastid. It localises to the chloroplast outer membrane. In terms of biological role, covalently attaches a chromophore to Cys residue(s) of phycobiliproteins. Required for plastid division, and involved in cell differentiation and regulation of the cell division plane. Maintenance of plastid homeostasis controls plant preconditioning to stress and stress acclimation. Confers sensitivity to cabbage leaf curl virus (CaLCuV), probably by supporting viral movement. This chain is Chromophore lyase CRL, chloroplastic (CRL), found in Arabidopsis thaliana (Mouse-ear cress).